A 237-amino-acid chain; its full sequence is Zinc finger protein 22 (237 aa).

Residues 1 to 33 (MRLGKPKGGISRSASQGKTYESKRKTARQRQKW) form a disordered region. N6-acetyllysine is present on residues lysine 18 and lysine 23. 5 consecutive C2H2-type zinc fingers follow at residues 55–82 (YKCTKCSKSFSQSSTLFQHKKIHTGKKS), 83–110 (HKCADCGKSFFQSSNLIQHRRIHTGEKP), 111–138 (YKCDECGERFKQSSNLIQHQRIHTGEKP), 139–166 (YCCDECGRCFSQSSHLIQHQRTHTGEKP), and 167–194 (YQCEECDKCFSQSSHLRQHMKVHKEKKS). Residues 188 to 217 (VHKEKKSHKRGKNARAKTHPVSWKRGKGRK) are compositionally biased toward basic residues. A disordered region spans residues 188–218 (VHKEKKSHKRGKNARAKTHPVSWKRGKGRKA).

It belongs to the krueppel C2H2-type zinc-finger protein family. In terms of tissue distribution, highly expressed in the ameloblast layer of mandibular incisors, moderately expressed in submandibular gland, calvaria, kidney and lung, and expressed at low levels in brain and thymus.

Its subcellular location is the nucleus. Its function is as follows. Binds DNA through the consensus sequence 5'-CAATG-3'. May be involved in transcriptional regulation and may play a role in tooth formation. The chain is Zinc finger protein 22 (Znf22) from Rattus norvegicus (Rat).